A 493-amino-acid chain; its full sequence is Glycerol kinase (493 aa).

Residue T13 participates in ADP binding. ATP is bound by residues T13, T14, and S15. T13 contacts sn-glycerol 3-phosphate. R17 provides a ligand contact to ADP. Positions 83, 84, 135, and 244 each coordinate sn-glycerol 3-phosphate. Positions 83, 84, 135, 244, and 245 each coordinate glycerol. Residues T266 and G309 each contribute to the ADP site. 4 residues coordinate ATP: T266, G309, Q313, and G410. Positions 410 and 414 each coordinate ADP.

This sequence belongs to the FGGY kinase family.

The enzyme catalyses glycerol + ATP = sn-glycerol 3-phosphate + ADP + H(+). It functions in the pathway polyol metabolism; glycerol degradation via glycerol kinase pathway; sn-glycerol 3-phosphate from glycerol: step 1/1. Inhibited by fructose 1,6-bisphosphate (FBP). Functionally, key enzyme in the regulation of glycerol uptake and metabolism. Catalyzes the phosphorylation of glycerol to yield sn-glycerol 3-phosphate. This chain is Glycerol kinase, found in Shewanella pealeana (strain ATCC 700345 / ANG-SQ1).